We begin with the raw amino-acid sequence, 266 residues long: MKKMSEIIATLKKDYIYNLMIKGKRQDGRGFKDFRDLKLETNVIVKAEGSAKVTLGNTQVLVGVKLQTGTPFPDSQDEGVIITNLELNPIASPEFEPGPPREEAIEMARVVDRGIRESGAIDIKKLCITVGESVWIVFIDVHVLNDDGNIIDASCLAAIAALMTTMVPNEQQGLGEDVPLAMKEMPVGITIAKIGSKLMVDPSLDEEAVCETKLTIVSSSDGSVAGMQKMGISPLTEAELFEAIDLALEKAAELRGLYLEGLAKSE.

It belongs to the RNase PH family. Rrp42 subfamily. In terms of assembly, component of the archaeal exosome complex. Forms a hexameric ring-like arrangement composed of 3 Rrp41-Rrp42 heterodimers. The hexameric ring associates with a trimer of Rrp4 and/or Csl4 subunits.

It is found in the cytoplasm. Functionally, non-catalytic component of the exosome, which is a complex involved in RNA degradation. Contributes to the structuring of the Rrp41 active site. The protein is Exosome complex component Rrp42 of Methanosarcina acetivorans (strain ATCC 35395 / DSM 2834 / JCM 12185 / C2A).